A 259-amino-acid chain; its full sequence is Thiazole synthase (259 aa).

Lys-99 functions as the Schiff-base intermediate with DXP in the catalytic mechanism. 1-deoxy-D-xylulose 5-phosphate is bound by residues Gly-160, Ala-187–Gly-188, and Asn-209–Thr-210.

The protein belongs to the ThiG family. Homotetramer. Forms heterodimers with either ThiH or ThiS.

It is found in the cytoplasm. The catalysed reaction is [ThiS sulfur-carrier protein]-C-terminal-Gly-aminoethanethioate + 2-iminoacetate + 1-deoxy-D-xylulose 5-phosphate = [ThiS sulfur-carrier protein]-C-terminal Gly-Gly + 2-[(2R,5Z)-2-carboxy-4-methylthiazol-5(2H)-ylidene]ethyl phosphate + 2 H2O + H(+). It participates in cofactor biosynthesis; thiamine diphosphate biosynthesis. Catalyzes the rearrangement of 1-deoxy-D-xylulose 5-phosphate (DXP) to produce the thiazole phosphate moiety of thiamine. Sulfur is provided by the thiocarboxylate moiety of the carrier protein ThiS. In vitro, sulfur can be provided by H(2)S. In Solibacter usitatus (strain Ellin6076), this protein is Thiazole synthase.